The sequence spans 360 residues: Protein OSB4, chloroplastic (360 aa).

A chloroplast-targeting transit peptide spans 1–61 (MQFLGRSISK…AEKSSEEWPR (61 aa)). Residues 28-64 (SQQFLSTSSTESSSRTRGGGGGNRAEKSSEEWPRPME) form a disordered region. The segment covering 33 to 43 (STSSTESSSRT) has biased composition (low complexity). Positions 51–61 (RAEKSSEEWPR) are enriched in basic and acidic residues. The 118-residue stretch at 71 to 188 (IANSIDLIGY…VMVRDLHYIE (118 aa)) folds into the SSB domain. PDF region stretches follow at residues 224 to 276 (WFDL…SELK) and 296 to 344 (WKDL…EKLP).

It is found in the plastid. The protein resides in the chloroplast. In terms of biological role, binds single-stranded DNA. The polypeptide is Protein OSB4, chloroplastic (OSB4) (Arabidopsis thaliana (Mouse-ear cress)).